A 392-amino-acid polypeptide reads, in one-letter code: Enoyl-[acyl-carrier-protein] reductase [NADH] (392 aa).

Residues 46–51 (GSSSGY), 72–73 (LE), 108–109 (DA), and 136–137 (VA) contribute to the NAD(+) site. Residue Tyr-225 coordinates substrate. Tyr-235 acts as the Proton donor in catalysis. NAD(+) is bound by residues Lys-244 and 273 to 275 (LVT).

This sequence belongs to the TER reductase family. In terms of assembly, monomer.

It carries out the reaction a 2,3-saturated acyl-[ACP] + NAD(+) = a (2E)-enoyl-[ACP] + NADH + H(+). It participates in lipid metabolism; fatty acid biosynthesis. Its function is as follows. Involved in the final reduction of the elongation cycle of fatty acid synthesis (FAS II). Catalyzes the reduction of a carbon-carbon double bond in an enoyl moiety that is covalently linked to an acyl carrier protein (ACP). The chain is Enoyl-[acyl-carrier-protein] reductase [NADH] from Streptomyces avermitilis (strain ATCC 31267 / DSM 46492 / JCM 5070 / NBRC 14893 / NCIMB 12804 / NRRL 8165 / MA-4680).